The following is a 901-amino-acid chain: Putative serine/threonine-protein kinase YPL150W (901 aa).

In terms of domain architecture, Protein kinase spans 41 to 287 (YKILKQIGEG…LSQVLRHPFL (247 aa)). ATP is bound by residues 47–55 (IGEGSFGKV) and Lys-70. Catalysis depends on Asp-157, which acts as the Proton acceptor. Phosphoserine is present on Ser-456. The tract at residues 500 to 530 (APSSGSFLKKNSGSIQKSRTDTVANPSRTES) is disordered. At Ser-533 the chain carries Phosphoserine. Low complexity predominate over residues 588–599 (SSISSEISQTST). 2 disordered regions span residues 588–629 (SSIS…NRPL) and 745–770 (TQRPWTGKRTYTTSRHGKNARRSSKR). Over residues 600-613 (GNYDSESAENSRSI) the composition is skewed to polar residues. Basic residues predominate over residues 759-770 (RHGKNARRSSKR).

It belongs to the protein kinase superfamily. Ser/Thr protein kinase family.

The enzyme catalyses L-seryl-[protein] + ATP = O-phospho-L-seryl-[protein] + ADP + H(+). The catalysed reaction is L-threonyl-[protein] + ATP = O-phospho-L-threonyl-[protein] + ADP + H(+). Functionally, putative serine/threonine-protein kinase. This Saccharomyces cerevisiae (strain ATCC 204508 / S288c) (Baker's yeast) protein is Putative serine/threonine-protein kinase YPL150W.